The chain runs to 125 residues: Histone H2A.v3 (125 aa).

It belongs to the histone H2A family. In terms of assembly, the nucleosome is a histone octamer containing two molecules each of H2A, H2B, H3 and H4 assembled in one H3-H4 heterotetramer and two H2A-H2B heterodimers. The octamer wraps approximately 147 bp of DNA.

It is found in the nucleus. The protein localises to the chromosome. Core component of nucleosome which plays a central role in DNA double strand break (DSB) repair. Nucleosomes wrap and compact DNA into chromatin, limiting DNA accessibility to the cellular machineries which require DNA as a template. Histones thereby play a central role in transcription regulation, DNA repair, DNA replication and chromosomal stability. DNA accessibility is regulated via a complex set of post-translational modifications of histones, also called histone code, and nucleosome remodeling. This chain is Histone H2A.v3 (H2Av3), found in Dictyostelium discoideum (Social amoeba).